A 335-amino-acid chain; its full sequence is Putative T-box protein 7 (335 aa).

The segment at residues 73–246 (LWSTFLECGT…NNPFAKGFRN (174 aa)) is a DNA-binding region (T-box).

The protein resides in the nucleus. The sequence is that of Putative T-box protein 7 from Caenorhabditis elegans.